The chain runs to 179 residues: MSEETKEEIKNEKVDEEVTEELTEEALEDIVEEEINELDEAQKLATEWENKFLRVSAEMQNVQRRGNEERLQLVKYRSQDLAKKILSSLDNLERALAVEGLTDDVKKGLEMVQESLISALKEEGVEEVSYESFDHNLHMAVQTVPADDEHPADSIVQVFQKGYQLHERLLRPAMVVVAQ.

The disordered stretch occupies residues 1 to 20; it reads MSEETKEEIKNEKVDEEVTE.

This sequence belongs to the GrpE family. Homodimer.

It is found in the cytoplasm. Its function is as follows. Participates actively in the response to hyperosmotic and heat shock by preventing the aggregation of stress-denatured proteins, in association with DnaK and GrpE. It is the nucleotide exchange factor for DnaK and may function as a thermosensor. Unfolded proteins bind initially to DnaJ; upon interaction with the DnaJ-bound protein, DnaK hydrolyzes its bound ATP, resulting in the formation of a stable complex. GrpE releases ADP from DnaK; ATP binding to DnaK triggers the release of the substrate protein, thus completing the reaction cycle. Several rounds of ATP-dependent interactions between DnaJ, DnaK and GrpE are required for fully efficient folding. This chain is Protein GrpE, found in Lactococcus lactis subsp. cremoris (strain MG1363).